Consider the following 40-residue polypeptide: Snaclec tokaracetin subunit alpha (40 aa).

The region spanning 1 to 40 is the C-type lectin domain; sequence DCPSGWSSFKQYCYKPFKQLKTWEDAERFCLEQVKGAHLV. Cys2 and Cys13 form a disulfide bridge.

It belongs to the snaclec family. As to quaternary structure, heterodimer of subunits alpha and beta; disulfide-linked. As to expression, expressed by the venom gland.

It localises to the secreted. Functionally, platelet antagonist that specifically and reversibly binds to a site on platelet glycoprotein Ibalpha (GP1BA) close to or identical with the site for vWF binding. It inhibits the binding of vWF to platelets and vWF-dependent shear-induced platelet aggregation. This Protobothrops tokarensis (Tokara habu) protein is Snaclec tokaracetin subunit alpha.